Consider the following 380-residue polypeptide: MSTSPIQYRLIKKEKHTGARLGEIITPHGTFPTPMFMPVGTQATVKTQSPEELKQMGSGIILANTYHLWLRPGDELIARAGGLHTFMNWDQPILTDSGGFQVYSLADSRNITEEGVTFKNHLNGSKMFLSPEKAISIQNNLGSDIMMSFDECPQFYQPYDYVKKSIERTSRWAERGLKAHSRPHDQGLFGIVQGAGFEDLRRQSAQDLVSMDFPGYSIGGLAVGESHEEMNAVLDFTTPMLPENKPRYLMGVGAPDSLIDGVIRGVDMFDCVLPTRIARNGTCMTSEGRLVVKNAQFEEDFTPLDHDCDCYTCSNYTRAYIRHLLKADETFGIRLTSYHNLYFLVNLMKKVRQAIMDDNLLEFREDFIERYGYNKSSRNF.

Aspartate 96 acts as the Proton acceptor in catalysis. Substrate-binding positions include 96-100, aspartate 150, glutamine 193, and glycine 220; that span reads DSGGF. Residues 251 to 257 form an RNA binding region; that stretch reads GVGAPDS. Residue aspartate 270 is the Nucleophile of the active site. An RNA binding; important for wobble base 34 recognition region spans residues 275-279; the sequence is TRIAR. Cysteine 308, cysteine 310, cysteine 313, and histidine 339 together coordinate Zn(2+).

It belongs to the queuine tRNA-ribosyltransferase family. Homodimer. Within each dimer, one monomer is responsible for RNA recognition and catalysis, while the other monomer binds to the replacement base PreQ1. It depends on Zn(2+) as a cofactor.

It catalyses the reaction 7-aminomethyl-7-carbaguanine + guanosine(34) in tRNA = 7-aminomethyl-7-carbaguanosine(34) in tRNA + guanine. Its pathway is tRNA modification; tRNA-queuosine biosynthesis. Its function is as follows. Catalyzes the base-exchange of a guanine (G) residue with the queuine precursor 7-aminomethyl-7-deazaguanine (PreQ1) at position 34 (anticodon wobble position) in tRNAs with GU(N) anticodons (tRNA-Asp, -Asn, -His and -Tyr). Catalysis occurs through a double-displacement mechanism. The nucleophile active site attacks the C1' of nucleotide 34 to detach the guanine base from the RNA, forming a covalent enzyme-RNA intermediate. The proton acceptor active site deprotonates the incoming PreQ1, allowing a nucleophilic attack on the C1' of the ribose to form the product. After dissociation, two additional enzymatic reactions on the tRNA convert PreQ1 to queuine (Q), resulting in the hypermodified nucleoside queuosine (7-(((4,5-cis-dihydroxy-2-cyclopenten-1-yl)amino)methyl)-7-deazaguanosine). The polypeptide is Queuine tRNA-ribosyltransferase (Streptococcus sanguinis (strain SK36)).